The primary structure comprises 709 residues: Coiled-coil domain-containing protein 13 (709 aa).

Coiled-coil stretches lie at residues 70–97, 139–178, and 206–288; these read IFEKRVLEDEIQHLRSELRETVDENGRL, ELSKKNRGLMAESESAKVRIKQLTNRIQELEHQLQMASAK, and EVKA…QRQN. Phosphoserine is present on S258. Residues 281–312 form a disordered region; it reads KQLGQRQNKPAGSSSSEVPLSSDSRKMTAQEK. The segment covering 293–302 has biased composition (low complexity); sequence SSSSEVPLSS. A coiled-coil region spans residues 323–457; that stretch reads DKQESWEKLA…ELEIGQLSVQ (135 aa). 3 disordered regions span residues 462–499, 512–542, and 600–641; these read KGGGEGASPADARFPEDQTPITNSPASAGDHVGRLGSS, SALTRPSLPSPHGTSPRFSDSPEQKGWQAQA, and KMRL…SSTQ. Phosphoserine is present on residues S469 and S532. Residues 539 to 604 are a coiled coil; that stretch reads QAQAAEMKAL…EQHLEKMRLE (66 aa).

Interacts with PCM1, CEP290 and PCNT.

The protein resides in the cytoplasm. Its subcellular location is the cytoskeleton. It is found in the microtubule organizing center. The protein localises to the centrosome. It localises to the centriolar satellite. The protein resides in the cilium basal body. Its function is as follows. Required for primary cilia formation and promotes the localization of the ciliopathy protein BBS4 to both centriolar satellites and cilia. In Mus musculus (Mouse), this protein is Coiled-coil domain-containing protein 13.